The primary structure comprises 210 residues: Thymidylate kinase (210 aa).

Residue 9–16 (GLEGAGKS) coordinates ATP.

Belongs to the thymidylate kinase family.

The catalysed reaction is dTMP + ATP = dTDP + ADP. In terms of biological role, phosphorylation of dTMP to form dTDP in both de novo and salvage pathways of dTTP synthesis. This is Thymidylate kinase from Aliivibrio fischeri (strain MJ11) (Vibrio fischeri).